The following is a 141-amino-acid chain: Large ribosomal subunit protein uL16m (141 aa).

It belongs to the universal ribosomal protein uL16 family.

The protein localises to the mitochondrion. The chain is Large ribosomal subunit protein uL16m (RPL16) from Acanthamoeba castellanii (Amoeba).